The sequence spans 244 residues: Extracellular superoxide dismutase [Cu-Zn] (244 aa).

The N-terminal stretch at 1–18 is a signal peptide; it reads MLALVCSCLLLAALPADT. Cystine bridges form between Cys-67–Cys-212 and Cys-129–Cys-211. Asn-111 carries N-linked (GlcNAc...) asparagine glycosylation. The Cu cation site is built by His-118, His-120, and His-135. Positions 135, 143, 146, and 149 each coordinate Zn(2+). His-185 lines the Cu cation pocket. The tract at residues 221-244 is disordered; the sequence is PWARQAQEHAERKKRRRESECKAA. Over residues 226-244 the composition is skewed to basic and acidic residues; sequence AQEHAERKKRRRESECKAA.

Belongs to the Cu-Zn superoxide dismutase family. In terms of assembly, homotetramer. Directly interacts with ATP7A; this interaction is copper-dependent and is required for SOD3 activity. Cu cation is required as a cofactor. It depends on Zn(2+) as a cofactor.

It is found in the secreted. Its subcellular location is the extracellular space. The protein localises to the golgi apparatus. The protein resides in the trans-Golgi network. The catalysed reaction is 2 superoxide + 2 H(+) = H2O2 + O2. Its function is as follows. Protect the extracellular space from toxic effect of reactive oxygen intermediates by converting superoxide radicals into hydrogen peroxide and oxygen. The sequence is that of Extracellular superoxide dismutase [Cu-Zn] (SOD3) from Oryctolagus cuniculus (Rabbit).